Reading from the N-terminus, the 179-residue chain is Large ribosomal subunit protein uL5 (179 aa).

This sequence belongs to the universal ribosomal protein uL5 family. Part of the 50S ribosomal subunit; part of the 5S rRNA/L5/L18/L25 subcomplex. Contacts the 5S rRNA and the P site tRNA. Forms a bridge to the 30S subunit in the 70S ribosome.

In terms of biological role, this is one of the proteins that bind and probably mediate the attachment of the 5S RNA into the large ribosomal subunit, where it forms part of the central protuberance. In the 70S ribosome it contacts protein S13 of the 30S subunit (bridge B1b), connecting the 2 subunits; this bridge is implicated in subunit movement. Contacts the P site tRNA; the 5S rRNA and some of its associated proteins might help stabilize positioning of ribosome-bound tRNAs. The chain is Large ribosomal subunit protein uL5 from Ectopseudomonas mendocina (strain ymp) (Pseudomonas mendocina).